Reading from the N-terminus, the 63-residue chain is Large ribosomal subunit protein bL32 (63 aa).

The segment at 1–45 is disordered; it reads MAVQQNKKSRSRRDMRRSHDALTKPTLSVDPTTGETHLRHHMTPD. A compositionally biased stretch (basic residues) spans 7-16; the sequence is KKSRSRRDMR. The span at 25–35 shows a compositional bias: polar residues; it reads PTLSVDPTTGE.

It belongs to the bacterial ribosomal protein bL32 family.

In Legionella pneumophila (strain Paris), this protein is Large ribosomal subunit protein bL32.